The primary structure comprises 72 residues: Large ribosomal subunit protein uL29 (72 aa).

It belongs to the universal ribosomal protein uL29 family.

The sequence is that of Large ribosomal subunit protein uL29 (rpmC) from Chlamydia pneumoniae (Chlamydophila pneumoniae).